Here is a 41-residue protein sequence, read N- to C-terminus: Photosystem I reaction center subunit IX (41 aa).

A helical membrane pass occupies residues 7–27 (YLSTAPVVALIWFTFTAGLLI).

The protein belongs to the PsaJ family.

It is found in the plastid. The protein localises to the chloroplast thylakoid membrane. In terms of biological role, may help in the organization of the PsaE and PsaF subunits. This is Photosystem I reaction center subunit IX from Pleurastrum terricola (Filamentous green alga).